A 450-amino-acid polypeptide reads, in one-letter code: MLKYFGTDGVRGEANKVLTPEMAFKLGRMGGYVLTKEKEDGGQARVLVSRDTRISGEMLEHALISGLLSVGIEVLECGVMTTPGLSYLVQAQGADAGVQISASHNPVEDNGIKFFGSNGLKLSDAKEEEIEELIDTKQDMLPRPSAEGLGTVTDFRDGSNKYIQFLENTIPEDLSGIKVVIDGANGAASAFISRLFADLDVDFTTISTHLNGLNINDHCGATHTARLQEEVVKQGAQLGLAFDGDADRCIAVDENGNEVDGDHIMYVIGSYLADHGRLKKDTIVTTVMSNLGFTKALERRGIKNVRTQVGDRYVSEEMRANGYSLGGEQSGHVIISDYHNTGDGMLTGLHLMLVMKKTGKSLTELLADFKEYPQVLVNVPVKDKNSWKNHQAVVDAIDSVEKDMAGNGRVLVRPSGTQELLRVMAEGPTQEITQEYVDRIVKVVTTEMGE.

Ser-103 acts as the Phosphoserine intermediate in catalysis. Ser-103, Asp-243, Asp-245, and Asp-247 together coordinate Mg(2+). A Phosphoserine modification is found at Ser-103.

Belongs to the phosphohexose mutase family. The cofactor is Mg(2+). In terms of processing, activated by phosphorylation.

It catalyses the reaction alpha-D-glucosamine 1-phosphate = D-glucosamine 6-phosphate. Its function is as follows. Catalyzes the conversion of glucosamine-6-phosphate to glucosamine-1-phosphate. This chain is Phosphoglucosamine mutase, found in Lactobacillus delbrueckii subsp. bulgaricus (strain ATCC 11842 / DSM 20081 / BCRC 10696 / JCM 1002 / NBRC 13953 / NCIMB 11778 / NCTC 12712 / WDCM 00102 / Lb 14).